The chain runs to 2368 residues: Voltage-dependent P/Q-type calcium channel subunit alpha-1A (2368 aa).

The Cytoplasmic segment spans residues 1–100 (MARFGDEMPG…KYAKKITEWP (100 aa)). The stretch at 65-365 (NPIPVRQNCL…LVLGVLSGEF (301 aa)) is one I repeat. A helical transmembrane segment spans residues 101-119 (PFEYMILATIIANCIVLAL). Over 120 to 138 (EQHLPDDDKTPMSERLDDT) the chain is Extracellular. Residues 139–156 (EPYFIGIFCFEAGIKIVA) form a helical membrane-spanning segment. Topologically, residues 157–168 (LGFAFHKGSYLR) are cytoplasmic. Residues 169-184 (NGWNVMDFVVVLTGIL) form a helical membrane-spanning segment. The Extracellular segment spans residues 185–192 (ATVGTEFD). Residues 193-211 (LRTLRAVRVLRPLKLVSGI) form a helical membrane-spanning segment. Residues 212-230 (PSLQVVLKSIMKAMIPLLQ) are Cytoplasmic-facing. A helical membrane pass occupies residues 231 to 250 (IGLLLFFAILIFAIIGLEFY). Residues 251-337 (MGKFHTTCFE…NSNDASGNTW (87 aa)) lie on the Extracellular side of the membrane. A glycan (N-linked (GlcNAc...) asparagine) is linked at Asn285. Glu320 contacts Ca(2+). Residues 338 to 362 (NWLYFIPLIIIGSFFMLNLVLGVLS) form a helical membrane-spanning segment. Topologically, residues 363–489 (GEFAKERERV…FYIRRMVKTQ (127 aa)) are cytoplasmic. Residues 385-402 (QQIERELNGYMEWISKAE) are binding to the beta subunit. Thr411 carries the phosphothreonine modification. Phosphoserine is present on residues Ser450 and Ser453. One copy of the II repeat lies at 475–719 (ERRMRFYIRR…VFLAIAVDNL (245 aa)). The chain crosses the membrane as a helical span at residues 490-509 (AFYWTVLSLVALNTLCVAIV). Residues 510–523 (HYNQPEWLSDFLYY) lie on the Extracellular side of the membrane. Residues 524–543 (AEFIFLGLFMSEMFIKMYGL) traverse the membrane as a helical segment. Over 544 to 551 (GTRPYFHS) the chain is Cytoplasmic. Residues 552 to 570 (SFNCFDCGVIIGSIFEVIW) traverse the membrane as a helical segment. At 571–580 (AVIKPGTSFG) the chain is on the extracellular side. Residues 581-599 (ISVLRALRLLRIFKVTKYW) traverse the membrane as a helical segment. The Cytoplasmic segment spans residues 600–618 (ASLRNLVVSLLNSMKSIIS). The helical transmembrane segment at 619-638 (LLFLLFLFIVVFALLGMQLF) threads the bilayer. Residues 639–691 (GGQFNFDEGTPPTNFDTFPAAIMTVFQILTGEDWNEVMYDGIKSQGGVQGGMV) are Extracellular-facing. Residue Glu670 coordinates Ca(2+). The helical transmembrane segment at 692 to 716 (FSIYFIVLTLFGNYTLLNVFLAIAV) threads the bilayer. The Cytoplasmic portion of the chain corresponds to 717–1190 (DNLANAQELT…TNPLRRLCHY (474 aa)). Residues Ser752 and Ser755 each carry the phosphoserine modification. Residues 762–781 (AVKEQQKNQKPTKSVWEQRT) are disordered. A compositionally biased stretch (polar residues) spans 769–779 (NQKPTKSVWEQ). Residue Ser792 is modified to Phosphoserine. Disordered regions lie at residues 823-1117 (PLVV…RKPE) and 1137-1170 (VNKNANPDPLPKKEEEKKEEEEADPGEDGPKPMP). Composition is skewed to basic and acidic residues over residues 850 to 862 (RPRESARDPDARR), 871 to 924 (APGR…EGEP), and 932 to 958 (RPGDEPDDRPERRPRPRDATRPARAAD). Phosphoserine occurs at positions 1038, 1042, and 1051. Residues 1056 to 1073 (GNSTNPGPALATNPQNAA) are compositionally biased toward polar residues. Positions 1074–1083 (SRRTPNNPGN) are enriched in low complexity. Residues 1094-1111 (ENSLIVTNPSSTQPNSAK) are compositionally biased toward polar residues. Positions 1153–1163 (KKEEEEADPGE) are enriched in acidic residues. An III repeat occupies 1182-1465 (NPLRRLCHYI…IFVALIIITF (284 aa)). The chain crosses the membrane as a helical span at residues 1191-1214 (ILNLRYFEMCILMVIAMSSIALAA). Topologically, residues 1215–1231 (EDPVQPNAPRNNVLRYF) are extracellular. The chain crosses the membrane as a helical span at residues 1232-1251 (DYVFTGVFTFEMVIKMIDLG). The Cytoplasmic portion of the chain corresponds to 1252-1258 (LVLHQGA). The helical transmembrane segment at 1259 to 1282 (YFRDLWNILDFIVVSGALVAFAFT) threads the bilayer. Residues 1283–1293 (GNSKGKDINTI) lie on the Extracellular side of the membrane. The helical transmembrane segment at 1294–1311 (KSLRVLRVLRPLKTIKRL) threads the bilayer. Residues 1312-1330 (PKLKAVFDCVVNSLKNVFN) are Cytoplasmic-facing. A helical membrane pass occupies residues 1331 to 1350 (ILIVYMLFMFIFAVVAVQLF). Residues 1351-1437 (KGKFFHCTDE…QGPSPGYRME (87 aa)) are Extracellular-facing. Glu1411 contributes to the Ca(2+) binding site. A helical transmembrane segment spans residues 1438 to 1462 (MSIFYVVYFVVFPFFFVNIFVALII). The Cytoplasmic portion of the chain corresponds to 1463–1518 (ITFQEQGDKMMEEYSLEKNERACIDFAISAKPLTRHMPQNKQSFQYRMWQFVVSPP). The stretch at 1502–1765 (NKQSFQYRMW…LFVAVIMDNF (264 aa)) is one IV repeat. Residues 1519 to 1537 (FEYTIMAMIALNTIVLMMK) form a helical membrane-spanning segment. The Extracellular portion of the chain corresponds to 1538–1551 (FYGASVAYENALRV). The helical transmembrane segment at 1552–1573 (FNIVFTSLFSLECVLKVMAFGI) threads the bilayer. Residues 1574-1580 (LNYFRDA) are Cytoplasmic-facing. Residues 1581-1600 (WNIFDFVTVLGSITDILVTE) traverse the membrane as a helical segment. At 1601 to 1607 (FGNNFIN) the chain is on the extracellular side. A glycan (N-linked (GlcNAc...) asparagine) is linked at Asn1607. The helical transmembrane segment at 1608–1626 (LSFLRLFRAARLIKLLRQG) threads the bilayer. Residues 1627–1645 (YTIRILLWTFVQSFKALPY) are Cytoplasmic-facing. The chain crosses the membrane as a helical span at residues 1646–1665 (VCLLIAMLFFIYAIIGMQVF). The Extracellular portion of the chain corresponds to 1666-1737 (GNIGIDGEDE…ILTADCGNEF (72 aa)). Residues 1738 to 1763 (AYFYFVSFIFLCSFLMLNLFVAVIMD) traverse the membrane as a helical segment. The Cytoplasmic segment spans residues 1764–2368 (NFEYLTRDSS…AYSESEDDWC (605 aa)). Phosphothreonine is present on Thr1935. The disordered stretch occupies residues 1940–2368 (QRMEPPSPTQ…AYSESEDDWC (429 aa)). 2 stretches are compositionally biased toward polar residues: residues 1948 to 1963 (TQEGGPSQNALPSTQL) and 1981 to 1997 (SWVTQRAQEMFQKTGTW). Residues Ser1998, Ser2016, Ser2028, Ser2030, Ser2071, and Ser2091 each carry the phosphoserine modification. Polar residues predominate over residues 2008 to 2017 (PNSQPNSQSV). Residues 2018 to 2034 (EMREMGTDGYSDSEHYL) are compositionally biased toward basic and acidic residues. Residues 2063–2073 (DLSTISDTSPM) show a composition bias toward polar residues. Composition is skewed to basic and acidic residues over residues 2085 to 2102 (RRLDDYSLERVPPEENQR) and 2143 to 2153 (PSKDRDQDRGR). Basic residues predominate over residues 2154-2172 (PKDRKHRPHHHHHHHHHHP). Positions 2173–2209 (PAPDRDRYAQERPDTGRARAREQRWSRSPSEGREHTT) are enriched in basic and acidic residues. Over residues 2213-2231 (GSSSVSGSPAPSTSGTSTP) the composition is skewed to low complexity. Over residues 2289–2305 (EGPRPRGADYTEPDSPR) the composition is skewed to basic and acidic residues.

This sequence belongs to the calcium channel alpha-1 subunit (TC 1.A.1.11) family. CACNA1A subfamily. Voltage-dependent calcium channels are multisubunit complexes, consisting of alpha-1, alpha-2, beta and delta subunits in a 1:1:1:1 ratio. The channel activity is directed by the pore-forming and voltage-sensitive alpha-1 subunit. In many cases, this subunit is sufficient to generate voltage-sensitive calcium channel activity. The auxiliary subunits beta and alpha-2/delta linked by a disulfide bridge regulate the channel activity. Interacts with CABP1. Interacts with the spider omega-agatoxin-IVA (AC P30288). Interacts with TSPOAP1. Brain specific; mainly found in the cerebellum, olfactory bulb, cerebral cortex, hippocampus, and inferior colliculus. In the hippocampus, expression occurs in pyramidal and granule neurons, as well as in interneurons. Purkinje cells contain predominantly P-type VSCC, the Q-type being a prominent calcium current in cerebellar granule cells.

It localises to the cell membrane. The catalysed reaction is Ca(2+)(in) = Ca(2+)(out). Voltage-sensitive calcium channels (VSCC) mediate the entry of calcium ions into excitable cells and are also involved in a variety of calcium-dependent processes, including muscle contraction, hormone or neurotransmitter release, gene expression, cell motility, cell division and cell death. The isoform alpha-1A gives rise to P and/or Q-type calcium currents. P/Q-type calcium channels belong to the 'high-voltage activated' (HVA) group and are specifically blocked by the spider omega-agatoxin-IVA (AC P54282). They are however insensitive to dihydropyridines (DHP). This Mus musculus (Mouse) protein is Voltage-dependent P/Q-type calcium channel subunit alpha-1A.